Here is a 1377-residue protein sequence, read N- to C-terminus: Zinc finger MYM-type protein 2 (1377 aa).

Glycyl lysine isopeptide (Lys-Gly) (interchain with G-Cter in SUMO2) cross-links involve residues Lys-48, Lys-88, Lys-98, and Lys-104. Composition is skewed to polar residues over residues 85–115 and 127–138; these read TSSKNEELQGNDSKITPSSKELASQKGSVSE and TNQGQEKNSSNF. The disordered stretch occupies residues 85 to 177; it reads TSSKNEELQG…GMGNSGITTE (93 aa). Residues 139-152 show a composition bias toward basic and acidic residues; it reads IERRPPETKNRTND. Lys-147 participates in a covalent cross-link: Glycyl lysine isopeptide (Lys-Gly) (interchain with G-Cter in SUMO2). Polar residues predominate over residues 153–164; sequence VDFSTSSFSRSK. At Ser-159 the chain carries Phosphoserine. Residues Lys-253 and Lys-297 each participate in a glycyl lysine isopeptide (Lys-Gly) (interchain with G-Cter in SUMO2) cross-link. The disordered stretch occupies residues 273–305; it reads NGESATHHNPDSWISQSASFPRNQKQPGVDSLS. Polar residues predominate over residues 284-298; that stretch reads SWISQSASFPRNQKQ. Ser-305 carries the phosphoserine modification. Residues Lys-312, Lys-325, Lys-348, and Lys-366 each participate in a glycyl lysine isopeptide (Lys-Gly) (interchain with G-Cter in SUMO2) cross-link. An MYM-type 1 zinc finger spans residues 327–363; it reads VKVTCANCKKPLQKGQTAYQRKGSAHLFCSTTCLSSF. An MYM-type 2 zinc finger spans residues 369-409; sequence PKKLCVMCKKDITTMKGTIVAQVDSSESFQEFCSTSCLSLY. Residues Lys-417, Lys-441, Lys-491, Lys-503, Lys-513, Lys-529, and Lys-532 each participate in a glycyl lysine isopeptide (Lys-Gly) (interchain with G-Cter in SUMO2) cross-link. MYM-type zinc fingers lie at residues 421-456 and 463-502; these read NKSRCTICGKLTEIRHEVSFKNMTHKLCSDHCFNRY and IMNCCEQCGEYLPSKGAGNNVLVIDGQQKRFCCQSCVSEY. An MYM-type 5 zinc finger spans residues 533–570; sequence LTTCTGCRTQCRFFDMTQCIGPNGYMEPYCSTACMNSH. Residues Lys-576, Lys-603, Lys-649, Lys-658, Lys-688, Lys-700, and Lys-709 each participate in a glycyl lysine isopeptide (Lys-Gly) (interchain with G-Cter in SUMO2) cross-link. The segment at 636 to 671 adopts an MYM-type 6 zinc-finger fold; it reads QLKCNYCKNSFCSKPEILEWENKVHQFCSKTCSDDY. 2 consecutive MYM-type zinc fingers follow at residues 723–758 and 764–799; these read RCVTCNYCSQLCKKGATKELDGVVRDFCSEDCCKKF and KAARCDCCKSQGTLKERVQWRGEMKHFCDQHCLLRF. Glycyl lysine isopeptide (Lys-Gly) (interchain with G-Cter in SUMO2) cross-links involve residues Lys-764, Lys-788, Lys-812, and Lys-829. A phosphoserine mark is found at Ser-838 and Ser-958. 2 disordered regions span residues 983 to 1002 and 1028 to 1064; these read LLKNSDPETQSSMPDVPYEP and VFGEEYEEQPRPRSKKKGAKRKAVSGYQSHDDSSDNS. Over residues 1039–1050 the composition is skewed to basic residues; the sequence is PRSKKKGAKRKA. At Ser-1064 the chain carries Phosphoserine. The residue at position 1376 (Thr-1376) is a Phosphothreonine.

May be a component of a BHC histone deacetylase complex that contains HDAC1, HDAC2, HMG20B/BRAF35, KDM1A, RCOR1/CoREST, PHF21A/BHC80, ZNF198, ZNF217, ZMYM3, GSE1 and GTF2I.

It localises to the nucleus. In terms of biological role, may function as a transcription factor. This is Zinc finger MYM-type protein 2 (ZMYM2) from Pongo abelii (Sumatran orangutan).